Reading from the N-terminus, the 736-residue chain is Catalase-peroxidase (736 aa).

Residues 1–21 (MFKKTILSFVISAVMVTAASA) form the signal peptide. The tryptophyl-tyrosyl-methioninium (Trp-Tyr) (with M-250) cross-link spans 102 to 224 (WHAAGTYRTH…LAAVEMGLIY (123 aa)). The active-site Proton acceptor is the histidine 103. The tryptophyl-tyrosyl-methioninium (Tyr-Met) (with W-102) cross-link spans 224 to 250 (YVNPVGPHGNPDPLLAANDIRMSFGRM). A heme b-binding site is contributed by histidine 265.

Belongs to the peroxidase family. Peroxidase/catalase subfamily. As to quaternary structure, homodimer or homotetramer. Heme b serves as cofactor. In terms of processing, formation of the three residue Trp-Tyr-Met cross-link is important for the catalase, but not the peroxidase activity of the enzyme.

It carries out the reaction H2O2 + AH2 = A + 2 H2O. The catalysed reaction is 2 H2O2 = O2 + 2 H2O. In terms of biological role, bifunctional enzyme with both catalase and broad-spectrum peroxidase activity. The polypeptide is Catalase-peroxidase (Shewanella woodyi (strain ATCC 51908 / MS32)).